Consider the following 566-residue polypeptide: Chaperone Ric-8 (566 aa).

This sequence belongs to the synembryn family. As to quaternary structure, interacts with GDP-bound G(i)-alpha protein. Does not interact with G-alpha proteins when they are in complex with subunits beta and gamma. Interacts with Frq2 in a Ca(2+)-independent manner but does not interact with Frq1.

It localises to the cytoplasm. It is found in the cell cortex. The protein resides in the presynapse. Chaperone that specifically binds and folds some, but not all, nascent G alpha proteins prior to G protein heterotrimer formation, promoting their stability and activity. Also acts as a guanine nucleotide exchange factor (GEF) for G alpha proteins by stimulating exchange of bound GDP for free GTP. Plays a key role in asymmetric spindle positioning, a step for asymmetric cell division that generates cell diversity during development by activating G(i) alpha protein independently of G-protein coupled receptors. Required during gastrulation and sensory organ precursor (SOP) formation. Plays a role in positively regulating synapse number and neurotransmitter release. The chain is Chaperone Ric-8 (ric8a) from Drosophila pseudoobscura pseudoobscura (Fruit fly).